Here is a 474-residue protein sequence, read N- to C-terminus: uncharacterized protein (474 aa).

A helical transmembrane segment spans residues 374-398 (GLICYLALFSISLMIENIIGLTISL).

The protein localises to the membrane. This is an uncharacterized protein from Borreliella burgdorferi (strain ATCC 35210 / DSM 4680 / CIP 102532 / B31) (Borrelia burgdorferi).